A 295-amino-acid polypeptide reads, in one-letter code: Pyridoxal 5'-phosphate synthase subunit PdxS (295 aa).

Asp25 contributes to the D-ribose 5-phosphate binding site. Lys82 serves as the catalytic Schiff-base intermediate with D-ribose 5-phosphate. Gly154 is a binding site for D-ribose 5-phosphate. Position 166 (Arg166) interacts with D-glyceraldehyde 3-phosphate. D-ribose 5-phosphate-binding positions include Gly215 and 236–237; that span reads GS.

The protein belongs to the PdxS/SNZ family. In terms of assembly, in the presence of PdxT, forms a dodecamer of heterodimers.

The catalysed reaction is aldehydo-D-ribose 5-phosphate + D-glyceraldehyde 3-phosphate + L-glutamine = pyridoxal 5'-phosphate + L-glutamate + phosphate + 3 H2O + H(+). It participates in cofactor biosynthesis; pyridoxal 5'-phosphate biosynthesis. Functionally, catalyzes the formation of pyridoxal 5'-phosphate from ribose 5-phosphate (RBP), glyceraldehyde 3-phosphate (G3P) and ammonia. The ammonia is provided by the PdxT subunit. Can also use ribulose 5-phosphate and dihydroxyacetone phosphate as substrates, resulting from enzyme-catalyzed isomerization of RBP and G3P, respectively. This chain is Pyridoxal 5'-phosphate synthase subunit PdxS, found in Heliobacterium modesticaldum (strain ATCC 51547 / Ice1).